Consider the following 123-residue polypeptide: Protein crumbs homolog 3 (123 aa).

Residues 1-26 form the signal peptide; sequence MASPGLGLLLALGLPLLPARWGRAWG. Residues 27 to 59 lie on the Extracellular side of the membrane; it reads QTLDPHVNENGTITPSAPGSGSNGALSQEAITA. N-linked (GlcNAc...) asparagine glycosylation is present at Asn36. The helical transmembrane segment at 60–80 threads the bilayer; the sequence is IIVVFSLLAAVLLAVGLVLLL. The Cytoplasmic segment spans residues 81–120; sequence RKLREKRQTQGTYRPSSEEQFNHAAEARAPQDSKETVRGC. Residues 87-123 are disordered; it reads RQTQGTYRPSSEEQFNHAAEARAPQDSKETVRGCLPI. Positions 96 to 117 are enriched in basic and acidic residues; sequence SSEEQFNHAAEARAPQDSKETV. Residues 119–123 carry the PDZ-binding motif; it reads GCLPI.

In terms of assembly, component of a complex composed of CRB3, PALS1 and PATJ. Interacts (via C-terminus) with PALS1 (via PDZ domain). Interacts with PARD6A. Interacts (via intracellular domain) with EPB41L5. Interacts with WDR83.

It localises to the apical cell membrane. The protein localises to the cell junction. The protein resides in the tight junction. In terms of biological role, involved in the establishment of cell polarity in mammalian epithelial cells. Regulates the morphogenesis of tight junctions. Involved in promoting phosphorylation and cytoplasmic retention of transcriptional coactivators YAP1 and WWTR1/TAZ which leads to suppression of TGFB1-dependent transcription of target genes such as CCN2/CTGF, SERPINE1/PAI1, SNAI1/SNAIL1 and SMAD7. The protein is Protein crumbs homolog 3 of Canis lupus familiaris (Dog).